Here is a 439-residue protein sequence, read N- to C-terminus: Tol-Pal system protein TolB (439 aa).

The N-terminal stretch at 1–22 (MKKPLRWLAALTALLLPLSAFA) is a signal peptide.

The protein belongs to the TolB family. The Tol-Pal system is composed of five core proteins: the inner membrane proteins TolA, TolQ and TolR, the periplasmic protein TolB and the outer membrane protein Pal. They form a network linking the inner and outer membranes and the peptidoglycan layer.

It is found in the periplasm. In terms of biological role, part of the Tol-Pal system, which plays a role in outer membrane invagination during cell division and is important for maintaining outer membrane integrity. In Xanthomonas campestris pv. campestris (strain 8004), this protein is Tol-Pal system protein TolB.